The following is a 407-amino-acid chain: Putative F-box protein At2g16220 (407 aa).

Residues 1–45 form the F-box domain; sequence MNSHFLTNDLILEVLSRLPLKSVARFHCVSKRWASMFGSPYFKEL. The interval 385 to 407 is disordered; sequence PPSVQPEYDESDSESEEDREIII. A compositionally biased stretch (acidic residues) spans 391-407; it reads EYDESDSESEEDREIII.

This is Putative F-box protein At2g16220 from Arabidopsis thaliana (Mouse-ear cress).